Here is a 92-residue protein sequence, read N- to C-terminus: Small ribosomal subunit protein uS17 (92 aa).

It belongs to the universal ribosomal protein uS17 family. In terms of assembly, part of the 30S ribosomal subunit.

Functionally, one of the primary rRNA binding proteins, it binds specifically to the 5'-end of 16S ribosomal RNA. This Cupriavidus metallidurans (strain ATCC 43123 / DSM 2839 / NBRC 102507 / CH34) (Ralstonia metallidurans) protein is Small ribosomal subunit protein uS17.